The following is a 204-amino-acid chain: Thymidylate kinase (204 aa).

Gly-11–Thr-18 is a binding site for ATP.

The protein belongs to the thymidylate kinase family.

It carries out the reaction dTMP + ATP = dTDP + ADP. It functions in the pathway pyrimidine metabolism; dTTP biosynthesis. This Ectromelia virus (strain Moscow) (ECTV) protein is Thymidylate kinase (TMK).